Consider the following 300-residue polypeptide: Cell adhesion molecule CEACAM19 (300 aa).

The first 32 residues, 1 to 32, serve as a signal peptide directing secretion; sequence MEIPMGTQGCFSKSLLLSASILVLWMLQGSQA. At 33 to 157 the chain is on the extracellular side; it reads ALYIQKIPEQ…PSTHLPTNAG (125 aa). N-linked (GlcNAc...) asparagine glycosylation occurs at Asn104. The helical transmembrane segment at 158–178 threads the bilayer; sequence ILAATIIGSLAAGALLISCIA. The Cytoplasmic segment spans residues 179–300; the sequence is YLLVTRNWRG…APYCQLVPTS (122 aa). Residues 259-291 are disordered; sequence SINPARPLPTPPHLQAEPENHQYQQDLLNPDPA.

This sequence belongs to the immunoglobulin superfamily. CEA family. In terms of tissue distribution, ubiquitous with highest expression in prostate, uterus, fetal brain, mammary gland, adrenal gland, skeletal muscle, small intestine, and kidney, and lower expression in lung, cerebellum, testis, liver, pancreas, bone marrow and ovary.

The protein localises to the membrane. This is Cell adhesion molecule CEACAM19 from Homo sapiens (Human).